Here is a 495-residue protein sequence, read N- to C-terminus: GTPase Der (495 aa).

EngA-type G domains lie at 3 to 166 (PVVA…VQDE) and 208 to 381 (IKLA…ACAT). GTP contacts are provided by residues 9–16 (GRPNVGKS), 56–60 (DTGGI), 118–121 (NKTD), 214–221 (GRPNVGKS), 261–265 (DTAGV), and 326–329 (NKWD). A KH-like domain is found at 382 to 466 (RRVSTAMLTR…PIRIQFKEGE (85 aa)).

The protein belongs to the TRAFAC class TrmE-Era-EngA-EngB-Septin-like GTPase superfamily. EngA (Der) GTPase family. Associates with the 50S ribosomal subunit.

In terms of biological role, GTPase that plays an essential role in the late steps of ribosome biogenesis. The sequence is that of GTPase Der from Pectobacterium carotovorum subsp. carotovorum (strain PC1).